The chain runs to 501 residues: UPF0616 protein C1687.04 (501 aa).

This sequence belongs to the UPF0616 family.

The protein resides in the cytoplasm. It localises to the nucleus. This chain is UPF0616 protein C1687.04, found in Schizosaccharomyces pombe (strain 972 / ATCC 24843) (Fission yeast).